Here is a 172-residue protein sequence, read N- to C-terminus: Interferon tau-2 (172 aa).

2 disulfides stabilise this stretch: Cys-1-Cys-99 and Cys-29-Cys-139. Residue Asn-78 is glycosylated (N-linked (GlcNAc...) asparagine).

Belongs to the alpha/beta interferon family. IFN-alphaII subfamily. Constitutively and exclusively expressed in the mononuclear cells of the extraembryonic trophectoderm.

It localises to the secreted. Functionally, paracrine hormone primarily responsible for maternal recognition of pregnancy. Interacts with endometrial receptors, probably type I interferon receptors, and blocks estrogen receptor expression, preventing the estrogen-induced increase in oxytocin receptor expression in the endometrium. This results in the suppression of the pulsatile endometrial release of the luteolytic hormone prostaglandin F2-alpha, hindering the regression of the corpus luteum (luteolysis) and therefore a return to ovarian cyclicity. This, and a possible direct effect of IFN-tau on prostaglandin synthesis, leads in turn to continued ovarian progesterone secretion, which stimulates the secretion by the endometrium of the nutrients required for the growth of the conceptus. In summary, displays particularly high antiviral and antiproliferative potency concurrently with particular weak cytotoxicity, high antiluteolytic activity and immunomodulatory properties. In contrast with other IFNs, IFN-tau is not virally inducible. This chain is Interferon tau-2 (IFNT2), found in Bos taurus (Bovine).